The sequence spans 93 residues: Defensin 5 (93 aa).

A signal peptide spans 1–19 (MKKLVLLSALVLLALQVEA). The propeptide occupies 20–58 (EPTPKTDEGTKTDEQPGKEDQVVSVSIEGQGDPAFQDAV). Disulfide bonds link C64/C92, C66/C81, and C71/C91.

Belongs to the alpha-defensin family. In terms of tissue distribution, small intestine. Not present in heart, liver, spleen, kidney, large intestine and colon.

Its subcellular location is the secreted. Its function is as follows. Probably contributes to the antimicrobial barrier function of the small intestine. The polypeptide is Defensin 5 (Rattus norvegicus (Rat)).